Reading from the N-terminus, the 396-residue chain is 1-deoxy-D-xylulose 5-phosphate reductoisomerase (396 aa).

Thr-10, Gly-11, Ser-12, Ile-13, Asn-38, and Asn-123 together coordinate NADPH. Lys-124 is a binding site for 1-deoxy-D-xylulose 5-phosphate. Glu-125 contributes to the NADPH binding site. Asp-149 contacts Mn(2+). 1-deoxy-D-xylulose 5-phosphate contacts are provided by Ser-150, Glu-151, Ser-185, and His-208. Residue Glu-151 coordinates Mn(2+). Gly-214 contributes to the NADPH binding site. 1-deoxy-D-xylulose 5-phosphate is bound by residues Ser-221, Asn-226, Lys-227, and Glu-230. Residue Glu-230 coordinates Mn(2+).

It belongs to the DXR family. It depends on Mg(2+) as a cofactor. Mn(2+) is required as a cofactor.

It catalyses the reaction 2-C-methyl-D-erythritol 4-phosphate + NADP(+) = 1-deoxy-D-xylulose 5-phosphate + NADPH + H(+). The protein operates within isoprenoid biosynthesis; isopentenyl diphosphate biosynthesis via DXP pathway; isopentenyl diphosphate from 1-deoxy-D-xylulose 5-phosphate: step 1/6. Catalyzes the NADPH-dependent rearrangement and reduction of 1-deoxy-D-xylulose-5-phosphate (DXP) to 2-C-methyl-D-erythritol 4-phosphate (MEP). The chain is 1-deoxy-D-xylulose 5-phosphate reductoisomerase from Shewanella pealeana (strain ATCC 700345 / ANG-SQ1).